A 367-amino-acid polypeptide reads, in one-letter code: Mannan endo-1,4-beta-mannosidase (367 aa).

The first 17 residues, Met1 to Ala17, serve as a signal peptide directing secretion. Residues Trp79 and Asn176 each coordinate substrate. Glu177 functions as the Proton donor in the catalytic mechanism. Cys192 and Cys259 form a disulfide bridge. Trp205, Trp240, and Tyr279 together coordinate substrate. Glu308 acts as the Nucleophile in catalysis. Trp337 serves as a coordination point for substrate.

Monomer. In terms of processing, the disulfide bond between Cys-192 and Cys-259 has not been observed in X-ray crystallography. This may be a consequence of the X-ray radiation.

The enzyme catalyses Random hydrolysis of (1-&gt;4)-beta-D-mannosidic linkages in mannans, galactomannans and glucomannans.. Hydrolyzes 1,4-beta linked polysaccharide backbones of mannans. Hydrolyzes mannohexaose (M6) preferentially to mannotriose (M4) and less preferentially to mannotetraose (M3), mannopentaose (M5), and mannobiose (M2); hydrolyzes M5 preferentially to M2, and M3, and less preferentially to mannotetraose M4; hydrolyzes M4 preferentially to M3, and less preferentially to mannose (M1), plus very little M2. Does not hydrolyze mannobiose or mannotriose. Does not hydrolyze xlyan, starch, cellulose or galactose. The sequence is that of Mannan endo-1,4-beta-mannosidase from Mytilus edulis (Blue mussel).